Reading from the N-terminus, the 381-residue chain is Succinyl-diaminopimelate desuccinylase (381 aa).

H69 lines the Zn(2+) pocket. D71 is an active-site residue. D103 serves as a coordination point for Zn(2+). E137 functions as the Proton acceptor in the catalytic mechanism. Residues E138, E166, and H355 each coordinate Zn(2+).

Belongs to the peptidase M20A family. DapE subfamily. As to quaternary structure, homodimer. Zn(2+) is required as a cofactor. The cofactor is Co(2+).

It carries out the reaction N-succinyl-(2S,6S)-2,6-diaminopimelate + H2O = (2S,6S)-2,6-diaminopimelate + succinate. It functions in the pathway amino-acid biosynthesis; L-lysine biosynthesis via DAP pathway; LL-2,6-diaminopimelate from (S)-tetrahydrodipicolinate (succinylase route): step 3/3. Its function is as follows. Catalyzes the hydrolysis of N-succinyl-L,L-diaminopimelic acid (SDAP), forming succinate and LL-2,6-diaminopimelate (DAP), an intermediate involved in the bacterial biosynthesis of lysine and meso-diaminopimelic acid, an essential component of bacterial cell walls. This Rickettsia rickettsii (strain Iowa) protein is Succinyl-diaminopimelate desuccinylase.